The primary structure comprises 369 residues: Glutamate 5-kinase (369 aa).

Position 9 (Lys9) interacts with ATP. Positions 49, 136, and 148 each coordinate substrate. Residues Thr168–Asp169 and Thr210–Lys216 contribute to the ATP site. Residues Gln275–Trp355 enclose the PUA domain.

The protein belongs to the glutamate 5-kinase family.

The protein localises to the cytoplasm. The enzyme catalyses L-glutamate + ATP = L-glutamyl 5-phosphate + ADP. It functions in the pathway amino-acid biosynthesis; L-proline biosynthesis; L-glutamate 5-semialdehyde from L-glutamate: step 1/2. Its function is as follows. Catalyzes the transfer of a phosphate group to glutamate to form L-glutamate 5-phosphate. In Streptococcus pneumoniae serotype 2 (strain D39 / NCTC 7466), this protein is Glutamate 5-kinase.